A 510-amino-acid polypeptide reads, in one-letter code: Bifunctional purine biosynthesis protein PurH (510 aa).

The MGS-like domain maps to 1-142; it reads MRALLSVSDK…KNYKDVMVLC (142 aa).

This sequence belongs to the PurH family.

The enzyme catalyses (6R)-10-formyltetrahydrofolate + 5-amino-1-(5-phospho-beta-D-ribosyl)imidazole-4-carboxamide = 5-formamido-1-(5-phospho-D-ribosyl)imidazole-4-carboxamide + (6S)-5,6,7,8-tetrahydrofolate. The catalysed reaction is IMP + H2O = 5-formamido-1-(5-phospho-D-ribosyl)imidazole-4-carboxamide. It functions in the pathway purine metabolism; IMP biosynthesis via de novo pathway; 5-formamido-1-(5-phospho-D-ribosyl)imidazole-4-carboxamide from 5-amino-1-(5-phospho-D-ribosyl)imidazole-4-carboxamide (10-formyl THF route): step 1/1. It participates in purine metabolism; IMP biosynthesis via de novo pathway; IMP from 5-formamido-1-(5-phospho-D-ribosyl)imidazole-4-carboxamide: step 1/1. The polypeptide is Bifunctional purine biosynthesis protein PurH (Campylobacter jejuni (strain RM1221)).